A 515-amino-acid polypeptide reads, in one-letter code: Ribosome assembly protein 4 (515 aa).

The tract at residues 20–128 (REVAIIPKDL…LLYTPRAVFK (109 aa)) is interaction with MDN1. Residues 29-125 (LPNVSIKFQA…QITLLYTPRA (97 aa)) form a ubiquitin-like (UBL) domain region. 8 WD repeats span residues 141-181 (GHGS…PMHT), 184-223 (GHYN…CLGD), 227-273 (GHSK…CQYT), 276-314 (GHTN…RCIN), 352-396 (AQKK…KPIA), 400-439 (GHQK…FIST), 442-481 (GHVA…LSVD), and 484-515 (GHKD…LWTH).

Belongs to the NLE1/RSA4 family. As to quaternary structure, associates with the pre-60S ribosomal particle. Interacts (via WD repeats) with uL18 (RPL5). Interacts (via UBL domain) with MDN1 (via VWFA/MIDAS domain). Interacts (via WD repeats) with NSA2.

It is found in the nucleus. Its subcellular location is the nucleolus. Involved in ribosome biogenesis. Required for processing and efficient intra-nuclear transport of pre-60S ribosomal subunits. Interacts with the AAA-ATPase Midasin (MDN1/REA1), which is essential for the ATP-dependent dissociation of a group of nonribosomal factors from the pre-60S particle. The protein is Ribosome assembly protein 4 of Saccharomyces cerevisiae (strain ATCC 204508 / S288c) (Baker's yeast).